Reading from the N-terminus, the 274-residue chain is NH(3)-dependent NAD(+) synthetase (274 aa).

46–53 contributes to the ATP binding site; it reads GISGGQDS. Asp52 contributes to the Mg(2+) binding site. Residue Arg140 participates in deamido-NAD(+) binding. Thr160 contacts ATP. Residue Glu165 participates in Mg(2+) binding. Residues Lys173 and Asp180 each contribute to the deamido-NAD(+) site. Residues Lys189 and Thr211 each coordinate ATP. 260–261 lines the deamido-NAD(+) pocket; that stretch reads HK.

Belongs to the NAD synthetase family. In terms of assembly, homodimer.

The catalysed reaction is deamido-NAD(+) + NH4(+) + ATP = AMP + diphosphate + NAD(+) + H(+). The protein operates within cofactor biosynthesis; NAD(+) biosynthesis; NAD(+) from deamido-NAD(+) (ammonia route): step 1/1. Its function is as follows. Catalyzes the ATP-dependent amidation of deamido-NAD to form NAD. Uses ammonia as a nitrogen source. The protein is NH(3)-dependent NAD(+) synthetase of Streptococcus pyogenes serotype M6 (strain ATCC BAA-946 / MGAS10394).